A 324-amino-acid polypeptide reads, in one-letter code: Putative transport protein TM_1187 (324 aa).

Transmembrane regions (helical) follow at residues L12–I32, I62–I82, I105–L125, I131–I151, G190–F210, F227–V247, G252–A272, and F285–I305.

It belongs to the autoinducer-2 exporter (AI-2E) (TC 2.A.86) family.

The protein localises to the cell membrane. The chain is Putative transport protein TM_1187 from Thermotoga maritima (strain ATCC 43589 / DSM 3109 / JCM 10099 / NBRC 100826 / MSB8).